A 331-amino-acid chain; its full sequence is Glyceraldehyde-3-phosphate dehydrogenase (331 aa).

Residues 10 to 11 (RI), D31, K75, and T117 contribute to the NAD(+) site. D-glyceraldehyde 3-phosphate contacts are provided by residues 148–150 (SCT) and T179. Catalysis depends on C149, which acts as the Nucleophile. NAD(+) is bound at residue N180. D-glyceraldehyde 3-phosphate contacts are provided by residues R194, 207 to 208 (TG), and R230. N311 lines the NAD(+) pocket.

Belongs to the glyceraldehyde-3-phosphate dehydrogenase family. As to quaternary structure, homotetramer.

It localises to the cytoplasm. It catalyses the reaction D-glyceraldehyde 3-phosphate + phosphate + NAD(+) = (2R)-3-phospho-glyceroyl phosphate + NADH + H(+). Its pathway is carbohydrate degradation; glycolysis; pyruvate from D-glyceraldehyde 3-phosphate: step 1/5. Its function is as follows. Catalyzes the oxidative phosphorylation of glyceraldehyde 3-phosphate (G3P) to 1,3-bisphosphoglycerate (BPG) using the cofactor NAD. The first reaction step involves the formation of a hemiacetal intermediate between G3P and a cysteine residue, and this hemiacetal intermediate is then oxidized to a thioester, with concomitant reduction of NAD to NADH. The reduced NADH is then exchanged with the second NAD, and the thioester is attacked by a nucleophilic inorganic phosphate to produce BPG. The sequence is that of Glyceraldehyde-3-phosphate dehydrogenase (gap) from Thermus aquaticus.